A 442-amino-acid polypeptide reads, in one-letter code: NALCN channel auxiliary factor 2 (442 aa).

Residues 42–62 form a helical membrane-spanning segment; it reads LASLLFFTVLLSNHLWLVSAG. N-linked (GlcNAc...) asparagine glycosylation is found at asparagine 77, asparagine 100, asparagine 171, asparagine 279, and asparagine 354. The chain crosses the membrane as a helical span at residues 406-426; it reads CVLVLMLLHTMASFSVVQNGV.

Belongs to the NALF family.

Its subcellular location is the membrane. Probable component of the NALCN channel complex, a channel that regulates the resting membrane potential and controls neuronal excitability. The sequence is that of NALCN channel auxiliary factor 2 (nalf2) from Xenopus tropicalis (Western clawed frog).